We begin with the raw amino-acid sequence, 381 residues long: Homoserine O-succinyltransferase (381 aa).

Positions 45–360 (NAVLVCHALN…PHGHDAFLLD (316 aa)) constitute an AB hydrolase-1 domain. Serine 151 acts as the Nucleophile in catalysis. Arginine 221 is a substrate binding site. Catalysis depends on residues aspartate 321 and histidine 354. Aspartate 355 serves as a coordination point for substrate.

The protein belongs to the AB hydrolase superfamily. MetX family. In terms of assembly, homodimer.

It is found in the cytoplasm. It carries out the reaction L-homoserine + succinyl-CoA = O-succinyl-L-homoserine + CoA. Its pathway is amino-acid biosynthesis; L-methionine biosynthesis via de novo pathway; O-succinyl-L-homoserine from L-homoserine: step 1/1. Its function is as follows. Transfers a succinyl group from succinyl-CoA to L-homoserine, forming succinyl-L-homoserine. This Paraburkholderia xenovorans (strain LB400) protein is Homoserine O-succinyltransferase.